Reading from the N-terminus, the 343-residue chain is Mas-related G-protein coupled receptor member F (343 aa).

Topologically, residues 1-44 (MAGNCSWEAHPGNRNKMCPGLSEAPELYSRGFLTIEQIAMLPPP) are extracellular. A glycan (N-linked (GlcNAc...) asparagine) is linked at N4. The chain crosses the membrane as a helical span at residues 45 to 66 (AVMNYIFLLLCLCGLVGNGLVL). The Cytoplasmic portion of the chain corresponds to 67 to 82 (WFFGFSIKRNPFSIYF). The chain crosses the membrane as a helical span at residues 83 to 104 (LHLASADVGYLFSKAVFSILNT). Residues 105 to 123 (GGFLGTFADYIRSVCRVLG) lie on the Extracellular side of the membrane. A helical transmembrane segment spans residues 124 to 144 (LCMFLTGVSLLPAVSAERCAS). The Cytoplasmic segment spans residues 145-160 (VIFPAWYWRRRPKRLS). Residues 161–181 (AVVCALLWVLSLLVTCLHNYF) traverse the membrane as a helical segment. Topologically, residues 182–198 (CVFLGRGAPGAACRHMD) are extracellular. Residues 199 to 220 (IFLGILLFLLCCPLMVLPCLAL) form a helical membrane-spanning segment. Residues 221-241 (ILHVECRARRRQRSAKLNHVI) are Cytoplasmic-facing. A helical membrane pass occupies residues 242-263 (LAMVSVFLVSSIYLGIDWFLFW). Residues 264–273 (VFQIPAPFPE) are Extracellular-facing. The helical transmembrane segment at 274–294 (YVTDLCICINSSAKPIVYFLA) threads the bilayer. Residues 295 to 343 (GRDKSQRLWEPLRVVFQRALRDGAELGEAGGSTPNTVTMEMQCPPGNAS) lie on the Cytoplasmic side of the membrane. The interval 320-343 (LGEAGGSTPNTVTMEMQCPPGNAS) is disordered.

Belongs to the G-protein coupled receptor 1 family. Mas subfamily.

The protein resides in the cell membrane. Functionally, orphan receptor. May bind to a neuropeptide and may regulate nociceptor function and/or development, including the sensation or modulation of pain. This Homo sapiens (Human) protein is Mas-related G-protein coupled receptor member F (MRGPRF).